A 432-amino-acid chain; its full sequence is Enolase (432 aa).

Residues 41-64 are disordered; that stretch reads QVPSGASTGSFEAHELRDGDPKRY. The segment covering 52–64 has biased composition (basic and acidic residues); the sequence is EAHELRDGDPKRY. (2R)-2-phosphoglycerate is bound at residue Q168. The Proton donor role is filled by E211. Residues D248, E289, and D316 each coordinate Mg(2+). (2R)-2-phosphoglycerate contacts are provided by K341, R370, S371, and K392. The active-site Proton acceptor is the K341.

It belongs to the enolase family. Requires Mg(2+) as cofactor.

It localises to the cytoplasm. It is found in the secreted. Its subcellular location is the cell surface. The catalysed reaction is (2R)-2-phosphoglycerate = phosphoenolpyruvate + H2O. It participates in carbohydrate degradation; glycolysis; pyruvate from D-glyceraldehyde 3-phosphate: step 4/5. Its function is as follows. Catalyzes the reversible conversion of 2-phosphoglycerate (2-PG) into phosphoenolpyruvate (PEP). It is essential for the degradation of carbohydrates via glycolysis. The protein is Enolase of Synechocystis sp. (strain ATCC 27184 / PCC 6803 / Kazusa).